The following is a 296-amino-acid chain: Nitrogenase iron protein (296 aa).

11-18 (GKGGIGKS) provides a ligand contact to ATP. C99 lines the [4Fe-4S] cluster pocket. R102 carries the ADP-ribosylarginine; by dinitrogenase reductase ADP-ribosyltransferase modification. Residue C133 participates in [4Fe-4S] cluster binding.

It belongs to the NifH/BchL/ChlL family. Homodimer. [4Fe-4S] cluster is required as a cofactor. The reversible ADP-ribosylation of Arg-102 inactivates the nitrogenase reductase and regulates nitrogenase activity.

The catalysed reaction is N2 + 8 reduced [2Fe-2S]-[ferredoxin] + 16 ATP + 16 H2O = H2 + 8 oxidized [2Fe-2S]-[ferredoxin] + 2 NH4(+) + 16 ADP + 16 phosphate + 6 H(+). Functionally, the key enzymatic reactions in nitrogen fixation are catalyzed by the nitrogenase complex, which has 2 components: the iron protein and the molybdenum-iron protein. The sequence is that of Nitrogenase iron protein (nifH1) from Sinorhizobium fredii (strain NBRC 101917 / NGR234).